The following is a 1165-amino-acid chain: DNA-directed RNA polymerase subunit beta' (1165 aa).

C60, C62, C75, and C78 together coordinate Zn(2+). 3 residues coordinate Mg(2+): D449, D451, and D453. Zn(2+) is bound by residues C794, C868, C875, and C878.

Belongs to the RNA polymerase beta' chain family. As to quaternary structure, the RNAP catalytic core consists of 2 alpha, 1 beta, 1 beta' and 1 omega subunit. When a sigma factor is associated with the core the holoenzyme is formed, which can initiate transcription. Mg(2+) serves as cofactor. Zn(2+) is required as a cofactor.

The catalysed reaction is RNA(n) + a ribonucleoside 5'-triphosphate = RNA(n+1) + diphosphate. Functionally, DNA-dependent RNA polymerase catalyzes the transcription of DNA into RNA using the four ribonucleoside triphosphates as substrates. This is DNA-directed RNA polymerase subunit beta' from Acetivibrio thermocellus (strain ATCC 27405 / DSM 1237 / JCM 9322 / NBRC 103400 / NCIMB 10682 / NRRL B-4536 / VPI 7372) (Clostridium thermocellum).